An 87-amino-acid polypeptide reads, in one-letter code: Protein Tat (87 aa).

Residues 1-21 (MDPVDPNLEPWNHPGSQPRTP) are disordered. The tract at residues 1–24 (MDPVDPNLEPWNHPGSQPRTPCNK) is interaction with human CREBBP. The segment at 1 to 48 (MDPVDPNLEPWNHPGSQPRTPCNKCYCKKCCYHCQMCFITKGLGISYG) is transactivation. Cys-22, Cys-25, and Cys-27 together coordinate Zn(2+). The cysteine-rich stretch occupies residues 22 to 37 (CNKCYCKKCCYHCQMC). The residue at position 28 (Lys-28) is an N6-acetyllysine; by host PCAF. Zn(2+) contacts are provided by Cys-30, His-33, Cys-34, and Cys-37. Positions 38–48 (FITKGLGISYG) are core. Positions 45 to 87 (ISYGRKKRRQRRRPPQGNQAHQDPLPEQPSSQHRGDHPTGPKE) are disordered. The segment covering 48 to 58 (GRKKRRQRRRP) has biased composition (basic residues). Positions 49 to 57 (RKKRRQRRR) match the Nuclear localization signal, RNA-binding (TAR), and protein transduction motif. The interaction with the host capping enzyme RNGTT stretch occupies residues 49 to 87 (RKKRRQRRRPPQGNQAHQDPLPEQPSSQHRGDHPTGPKE). Lys-50 and Lys-51 each carry N6-acetyllysine; by host EP300 and GCN5L2. Asymmetric dimethylarginine; by host PRMT6 occurs at positions 52 and 53. The span at 77 to 87 (HRGDHPTGPKE) shows a compositional bias: basic and acidic residues. Residues 78–80 (RGD) carry the Cell attachment site motif.

It belongs to the lentiviruses Tat family. As to quaternary structure, interacts with host CCNT1. Associates with the P-TEFb complex composed at least of Tat, P-TEFb (CDK9 and CCNT1), TAR RNA, RNA Pol II. Recruits the HATs CREBBP, TAF1/TFIID, EP300, PCAF and GCN5L2. Interacts with host KAT5/Tip60; this interaction targets the latter to degradation. Interacts with the host deacetylase SIRT1. Interacts with host capping enzyme RNGTT; this interaction stimulates RNGTT. Binds to host KDR, and to the host integrins ITGAV/ITGB3 and ITGA5/ITGB1. Interacts with host KPNB1/importin beta-1 without previous binding to KPNA1/importin alpha-1. Interacts with EIF2AK2. Interacts with host nucleosome assembly protein NAP1L1; this interaction may be required for the transport of Tat within the nucleus, since the two proteins interact at the nuclear rim. Interacts with host C1QBP/SF2P32; this interaction involves lysine-acetylated Tat. Interacts with the host chemokine receptors CCR2, CCR3 and CXCR4. Interacts with host DPP4/CD26; this interaction may trigger an anti-proliferative effect. Interacts with host LDLR. Interacts with the host extracellular matrix metalloproteinase MMP1. Interacts with host PRMT6; this interaction mediates Tat's methylation. Interacts with, and is ubiquitinated by MDM2/Hdm2. Interacts with host PSMC3 and HTATIP2. Interacts with STAB1; this interaction may overcome SATB1-mediated repression of IL2 and IL2RA (interleukin) in T cells by binding to the same domain than HDAC1. Interacts (when acetylated) with human CDK13, thereby increasing HIV-1 mRNA splicing and promoting the production of the doubly spliced HIV-1 protein Nef. Interacts with host TBP; this interaction modulates the activity of transcriptional pre-initiation complex. Interacts with host RELA. Interacts with host PLSCR1; this interaction negatively regulates Tat transactivation activity by altering its subcellular distribution. In terms of processing, asymmetrical arginine methylation by host PRMT6 seems to diminish the transactivation capacity of Tat and affects the interaction with host CCNT1. Post-translationally, acetylation by EP300, CREBBP, GCN5L2/GCN5 and PCAF regulates the transactivation activity of Tat. EP300-mediated acetylation of Lys-50 promotes dissociation of Tat from the TAR RNA through the competitive binding to PCAF's bromodomain. In addition, the non-acetylated Tat's N-terminus can also interact with PCAF. PCAF-mediated acetylation of Lys-28 enhances Tat's binding to CCNT1. Lys-50 is deacetylated by SIRT1. Polyubiquitination by host MDM2 does not target Tat to degradation, but activates its transactivation function and fosters interaction with CCNT1 and TAR RNA. In terms of processing, phosphorylated by EIF2AK2 on serine and threonine residues adjacent to the basic region important for TAR RNA binding and function. Phosphorylation of Tat by EIF2AK2 is dependent on the prior activation of EIF2AK2 by dsRNA.

The protein localises to the host nucleus. It is found in the host nucleolus. The protein resides in the host cytoplasm. It localises to the secreted. In terms of biological role, transcriptional activator that increases RNA Pol II processivity, thereby increasing the level of full-length viral transcripts. Recognizes a hairpin structure at the 5'-LTR of the nascent viral mRNAs referred to as the transactivation responsive RNA element (TAR) and recruits the cyclin T1-CDK9 complex (P-TEFb complex) that will in turn hyperphosphorylate the RNA polymerase II to allow efficient elongation. The CDK9 component of P-TEFb and other Tat-activated kinases hyperphosphorylate the C-terminus of RNA Pol II that becomes stabilized and much more processive. Other factors such as HTATSF1/Tat-SF1, SUPT5H/SPT5, and HTATIP2 are also important for Tat's function. Besides its effect on RNA Pol II processivity, Tat induces chromatin remodeling of proviral genes by recruiting the histone acetyltransferases (HATs) CREBBP, EP300 and PCAF to the chromatin. This also contributes to the increase in proviral transcription rate, especially when the provirus integrates in transcriptionally silent region of the host genome. To ensure maximal activation of the LTR, Tat mediates nuclear translocation of NF-kappa-B by interacting with host RELA. Through its interaction with host TBP, Tat may also modulate transcription initiation. Tat can reactivate a latently infected cell by penetrating in it and transactivating its LTR promoter. In the cytoplasm, Tat is thought to act as a translational activator of HIV-1 mRNAs. Extracellular circulating Tat can be endocytosed by surrounding uninfected cells via the binding to several surface receptors such as CD26, CXCR4, heparan sulfate proteoglycans (HSPG) or LDLR. Neurons are rarely infected, but they internalize Tat via their LDLR. Through its interaction with nuclear HATs, Tat is potentially able to control the acetylation-dependent cellular gene expression. Modulates the expression of many cellular genes involved in cell survival, proliferation or in coding for cytokines or cytokine receptors. Tat plays a role in T-cell and neurons apoptosis. Tat induced neurotoxicity and apoptosis probably contribute to neuroAIDS. Circulating Tat also acts as a chemokine-like and/or growth factor-like molecule that binds to specific receptors on the surface of the cells, affecting many cellular pathways. In the vascular system, Tat binds to ITGAV/ITGB3 and ITGA5/ITGB1 integrins dimers at the surface of endothelial cells and competes with bFGF for heparin-binding sites, leading to an excess of soluble bFGF. The sequence is that of Protein Tat from Homo sapiens (Human).